Consider the following 1179-residue polypeptide: ATP-dependent helicase/deoxyribonuclease subunit B (1179 aa).

This sequence belongs to the helicase family. AddB/RexB type 2 subfamily. Heterodimer of AddA and RexB. Requires Mg(2+) as cofactor.

The heterodimer acts as both an ATP-dependent DNA helicase and an ATP-dependent, dual-direction single-stranded exonuclease. Recognizes the chi site generating a DNA molecule suitable for the initiation of homologous recombination. This subunit has 5' -&gt; 3' nuclease activity but not helicase activity. The sequence is that of ATP-dependent helicase/deoxyribonuclease subunit B from Lactobacillus delbrueckii subsp. bulgaricus (strain ATCC 11842 / DSM 20081 / BCRC 10696 / JCM 1002 / NBRC 13953 / NCIMB 11778 / NCTC 12712 / WDCM 00102 / Lb 14).